The primary structure comprises 89 residues: Large ribosomal subunit protein bL31B (89 aa).

It belongs to the bacterial ribosomal protein bL31 family. Type B subfamily. Part of the 50S ribosomal subunit.

This is Large ribosomal subunit protein bL31B from Corynebacterium aurimucosum (strain ATCC 700975 / DSM 44827 / CIP 107346 / CN-1) (Corynebacterium nigricans).